A 212-amino-acid polypeptide reads, in one-letter code: Ribonuclease HII (212 aa).

The RNase H type-2 domain occupies 17 to 206 (RVIAGVDEAG…KSTKPQSLQT (190 aa)). A divalent metal cation-binding residues include Asp23, Glu24, and Asp115.

Belongs to the RNase HII family. The cofactor is Mn(2+). Mg(2+) is required as a cofactor.

Its subcellular location is the cytoplasm. It catalyses the reaction Endonucleolytic cleavage to 5'-phosphomonoester.. In terms of biological role, endonuclease that specifically degrades the RNA of RNA-DNA hybrids. This is Ribonuclease HII from Syntrophus aciditrophicus (strain SB).